An 894-amino-acid chain; its full sequence is Eukaryotic translation initiation factor 3 subunit C (894 aa).

Disordered regions lie at residues 1 to 28 and 162 to 235; these read MSRF…KANK and SDYR…VTKM. Acidic residues-rich tracts occupy residues 12–22, 169–189, and 203–214; these read SDTDSSEDEVE, DEDG…EEVP, and SESESDSDDDDS. Residues 215–224 are compositionally biased toward polar residues; it reads FNWSSEPDTN. Positions 625-801 constitute a PCI domain; that stretch reads YHMHINVELM…DCLIMHRVEP (177 aa). A disordered region spans residues 824–894; that stretch reads QILEPRTGRG…RRHPQKPRAF (71 aa). Basic and acidic residues predominate over residues 845–854; sequence RNERQGDKQK. Over residues 855 to 870 the composition is skewed to gly residues; it reads GSGGFQGERRGGPGGP. Over residues 884–894 the composition is skewed to basic residues; it reads QRRHPQKPRAF.

It belongs to the eIF-3 subunit C family. In terms of assembly, component of the eukaryotic translation initiation factor 3 (eIF-3) complex.

Its subcellular location is the cytoplasm. Component of the eukaryotic translation initiation factor 3 (eIF-3) complex, which is involved in protein synthesis of a specialized repertoire of mRNAs and, together with other initiation factors, stimulates binding of mRNA and methionyl-tRNAi to the 40S ribosome. The eIF-3 complex specifically targets and initiates translation of a subset of mRNAs involved in cell proliferation. In Caenorhabditis briggsae, this protein is Eukaryotic translation initiation factor 3 subunit C.